The following is a 316-amino-acid chain: Acetyl-coenzyme A carboxylase carboxyl transferase subunit alpha (316 aa).

The region spanning 39-293 (RLQDKSKALT…RGELLTQLKM (255 aa)) is the CoA carboxyltransferase C-terminal domain.

Belongs to the AccA family. As to quaternary structure, acetyl-CoA carboxylase is a heterohexamer composed of biotin carboxyl carrier protein (AccB), biotin carboxylase (AccC) and two subunits each of ACCase subunit alpha (AccA) and ACCase subunit beta (AccD).

The protein resides in the cytoplasm. It catalyses the reaction N(6)-carboxybiotinyl-L-lysyl-[protein] + acetyl-CoA = N(6)-biotinyl-L-lysyl-[protein] + malonyl-CoA. Its pathway is lipid metabolism; malonyl-CoA biosynthesis; malonyl-CoA from acetyl-CoA: step 1/1. Component of the acetyl coenzyme A carboxylase (ACC) complex. First, biotin carboxylase catalyzes the carboxylation of biotin on its carrier protein (BCCP) and then the CO(2) group is transferred by the carboxyltransferase to acetyl-CoA to form malonyl-CoA. The polypeptide is Acetyl-coenzyme A carboxylase carboxyl transferase subunit alpha (Pseudomonas aeruginosa (strain LESB58)).